A 245-amino-acid polypeptide reads, in one-letter code: Bax inhibitor 1 (245 aa).

Topologically, residues Met1–His30 are cytoplasmic. Residues Leu31–Leu51 traverse the membrane as a helical segment. Topologically, residues Gln52–Asp55 are lumenal. A helical membrane pass occupies residues Phe56–Phe76. Residues Tyr77–Leu88 are Cytoplasmic-facing. The helical transmembrane segment at Gly89–Ile109 threads the bilayer. Residues Cys110–Ala115 lie on the Lumenal side of the membrane. The chain crosses the membrane as a helical span at residues Ile116–Leu136. At Leu137–Lys142 the chain is on the cytoplasmic side. A helical transmembrane segment spans residues Tyr143 to Phe163. Residues Asn164–Ser169 are Lumenal-facing. A helical transmembrane segment spans residues Tyr170–Tyr190. Over Asp191 to Lys245 the chain is Cytoplasmic.

This sequence belongs to the BI1 family.

The protein localises to the endoplasmic reticulum membrane. Its function is as follows. Suppressor of apoptosis. Modulates unfolded protein response signaling. Negatively regulates autophagy and autophagosome formation, especially during periods of nutrient deprivation, and reduces cell survival during starvation. The protein is Bax inhibitor 1 of Drosophila melanogaster (Fruit fly).